The following is a 244-amino-acid chain: MKIDLNADLGEGCASDAELLTLVSSANIACGFHAGDAQTMQACVREAIKNGVAIGAHPSFPDRENFGRSAMQLPPETVYAQTLYQIGALATIARAQGGVMRHVKPHGMLYNQAAKEAQLADAIARAVYACDPALVLVGLAGSELIRAGKQYGLTTREEVFADRGYQADGSLVPRNQPGALIENEEQALAQTLEMVQHGRVKSITGEWATVTAQTVCLHGDGEHALAFARRLRSTFAEKGIVVAA.

Belongs to the LamB/PxpA family. In terms of assembly, forms a complex composed of PxpA, PxpB and PxpC.

It catalyses the reaction 5-oxo-L-proline + ATP + 2 H2O = L-glutamate + ADP + phosphate + H(+). Its function is as follows. Catalyzes the cleavage of 5-oxoproline to form L-glutamate coupled to the hydrolysis of ATP to ADP and inorganic phosphate. In Shigella dysenteriae serotype 1 (strain Sd197), this protein is 5-oxoprolinase subunit A.